The following is a 331-amino-acid chain: Lactamase-like protein nscB (331 aa).

Zn(2+)-binding residues include H106, H108, D110, and H111. Catalysis depends on D110, which acts as the Proton donor/acceptor.

This sequence belongs to the metallo-beta-lactamase superfamily. Requires Zn(2+) as cofactor.

It participates in secondary metabolite biosynthesis. Lactamase-like protein; part of the gene cluster that mediates the biosynthesis of neosartoricin B, a prenylated anthracenone that probably exhibits T-cell antiproliferative activity, suggestive of a physiological role as an immunosuppressive agent. The non-reducing polyketide synthase nscA probably synthesizes and cyclizes the decaketide backbone. The hydrolase nscB then mediates the product release through hydrolysis followed by spontaneous decarboxylation. The prenyltransferase nscD catalyzes the addition of the dimethylallyl group to the aromatic C5. The FAD-dependent monooxygenase nscC is then responsible for the stereospecific hydroxylation at C2. Neosartoricin B can be converted into two additional compounds neosartoricins C and D. Neosartoricin C is a spirocyclic compound that is cyclized through the attack of C3 hydroxyl on C14, followed by dehydration. On the other hand, neosartoricin D is a further cyclized compound in which attack of C2 on C14 in neosartoricin C results in the formation of the acetal-containing dioxabicyclo-octanone ring. Both of these compounds are novel and possibly represent related metabolites of the gene cluster. This chain is Lactamase-like protein nscB, found in Trichophyton equinum (strain ATCC MYA-4606 / CBS 127.97) (Horse ringworm fungus).